Here is a 262-residue protein sequence, read N- to C-terminus: R3H domain-containing protein 4 (262 aa).

2 disordered regions span residues 1–27 (MVALDNSEGGPEATPSGETRLSLPGCL) and 132–155 (YLEDESQGKRRRGPGRGEDRRRED). A compositionally biased stretch (basic and acidic residues) spans 146–155 (GRGEDRRRED). The region spanning 182–245 (METLESWEER…RRQMKVSNRH (64 aa)) is the R3H domain.

It is found in the nucleus. The sequence is that of R3H domain-containing protein 4 (R3hdm4) from Mus musculus (Mouse).